The following is a 156-amino-acid chain: Radiation-inducible immediate-early gene IEX-1 (156 aa).

Residues 1-62 are disordered; that stretch reads MCHSRSCHPT…SASRGHRKRS (62 aa). Residues 1–82 lie on the Cytoplasmic side of the membrane; that stretch reads MCHSRSCHPT…RQLPVEEPNP (82 aa). At Thr-18 the chain carries Phosphothreonine; by MAPK1. Ser-31 carries the phosphoserine modification. The span at 44-55 shows a compositional bias: low complexity; the sequence is PAAAPAGRPSAS. The chain crosses the membrane as a helical; Signal-anchor for type II membrane protein span at residues 83–99; the sequence is AKRLLFLLLTIVFCQIL. Residues 100 to 156 lie on the Extracellular side of the membrane; it reads MAEEGVPAPLPPEDAPNAASLAPTPVSAVLEPFNLTSEPSDYALDLSTFLQQHPAAF. Thr-123 is modified (phosphothreonine; by MAPK1). Ser-126 carries the post-translational modification Phosphoserine; by MAPK1. Asn-133 carries an N-linked (GlcNAc...) asparagine glycan.

Belongs to the IER3 family. In terms of assembly, interacts with the PPP2R5C-PP2A holoenzyme and ERK kinases; regulates ERK dephosphorylation. Post-translationally, phosphorylated at Thr-18, Thr-123 and Ser-126 by MAPK1/ERK2 and probably MAPK3/ERK1. Upon phosphorylation by MAPK1/ERK2 and MAPK3/ERK1, acquires the ability to inhibit cell death induced by various stimuli. In terms of processing, glycosylated.

The protein localises to the membrane. Its function is as follows. May play a role in the ERK signaling pathway by inhibiting the dephosphorylation of ERK by phosphatase PP2A-PPP2R5C holoenzyme. Also acts as an ERK downstream effector mediating survival. As a member of the NUPR1/RELB/IER3 survival pathway, may provide pancreatic ductal adenocarcinoma with remarkable resistance to cell stress, such as starvation or gemcitabine treatment. The sequence is that of Radiation-inducible immediate-early gene IEX-1 (IER3) from Homo sapiens (Human).